We begin with the raw amino-acid sequence, 465 residues long: Probable inactive receptor-like kinase BSK12 (465 aa).

Residues 1–12 (MGCCYSLSSTVD) show a composition bias toward polar residues. The disordered stretch occupies residues 1 to 34 (MGCCYSLSSTVDPVQDHTTDASSEPRNGGGEDPP). The N-myristoyl glycine moiety is linked to residue Gly-2. S-palmitoyl cysteine attachment occurs at residues Cys-3 and Cys-4. A Protein kinase domain is found at 50-291 (FSPENIVSDQ…KEIVATLETL (242 aa)). ATP is bound by residues 56–64 (VSDQTSDVV) and Lys-78.

This sequence belongs to the protein kinase superfamily. Ser/Thr protein kinase family. Interacts with YDA. Post-translationally, diacylation-mediated membrane association is essential for BSK12 function. Expressed at the mRNA level in the sperm cells in mature pollen, but the protein is only detectable in the zygote and the micropylar endosperm upon fertilization.

Its subcellular location is the cell membrane. Its function is as follows. Probable inactive protein kinase that activates the YODA MAP kinase cascade, which regulates the asymmetric first division and embryo polarity, by promoting the elongation of the zygote and the development of its basal daughter cell into the extra-embryonic suspensor. Acts as an adapter at the plasma membrane, possibly by recruiting and binding an activator. The chain is Probable inactive receptor-like kinase BSK12 from Arabidopsis thaliana (Mouse-ear cress).